The chain runs to 635 residues: ATP-dependent zinc metalloprotease FtsH (635 aa).

Over 1-4 (MVKN) the chain is Cytoplasmic. Residues 5–25 (LVLWVVVAVIMMTAYQSFNSS) traverse the membrane as a helical segment. Topologically, residues 26-97 (SVENSTDYTT…VEGTPFERRG (72 aa)) are periplasmic. The chain crosses the membrane as a helical span at residues 98-118 (FLSQILISWFPMLFLVGVWVF). Residues 119 to 635 (FMRQMQGGGG…AVENTDDFNV (517 aa)) lie on the Cytoplasmic side of the membrane. An ATP-binding site is contributed by 191–198 (GPPGTGKT). Histidine 413 provides a ligand contact to Zn(2+). The active site involves glutamate 414. Zn(2+) contacts are provided by histidine 417 and aspartate 491. Positions 593 to 635 (NREPVTPPSGWGEPKTQQAAYANSTTNDTKPESAVENTDDFNV) are disordered. The segment covering 607 to 620 (KTQQAAYANSTTND) has biased composition (polar residues).

The protein in the central section; belongs to the AAA ATPase family. This sequence in the C-terminal section; belongs to the peptidase M41 family. As to quaternary structure, homohexamer. Requires Zn(2+) as cofactor.

The protein localises to the cell inner membrane. Its function is as follows. Acts as a processive, ATP-dependent zinc metallopeptidase for both cytoplasmic and membrane proteins. Plays a role in the quality control of integral membrane proteins. The polypeptide is ATP-dependent zinc metalloprotease FtsH (Haemophilus influenzae (strain ATCC 51907 / DSM 11121 / KW20 / Rd)).